The primary structure comprises 158 residues: UPF0735 ACT domain-containing protein Bsph_3944 (158 aa).

Residues 80-155 enclose the ACT domain; sequence TVFLQLQDRK…FVESAEVISS (76 aa).

This sequence belongs to the UPF0735 family.

This chain is UPF0735 ACT domain-containing protein Bsph_3944, found in Lysinibacillus sphaericus (strain C3-41).